Consider the following 177-residue polypeptide: Large ribosomal subunit protein eL20 (177 aa).

This sequence belongs to the eukaryotic ribosomal protein eL20 family.

This chain is Large ribosomal subunit protein eL20 (RpL18A), found in Drosophila melanogaster (Fruit fly).